The chain runs to 429 residues: E3 ubiquitin-protein ligase ZNRF4 (429 aa).

A signal peptide spans 1–27 (MLRCRPEPLMPRATRVAVAVSLPLSHA). Topologically, residues 28–250 (VIPTQLPSHP…PPCRDLDCHP (223 aa)) are lumenal. Residues 30 to 64 (PTQLPSHPGHRPSGRPRRCPKAPCLPSPVGLSSTQ) are disordered. Over residues 37–49 (PGHRPSGRPRRCP) the composition is skewed to basic residues. N152 is a glycosylation site (N-linked (GlcNAc...) asparagine). One can recognise a PA domain in the interval 152 to 223 (NRSLGAIALI…VGEAASQDLR (72 aa)). The chain crosses the membrane as a helical span at residues 251-271 (VLTVSWALGRTLALVVSTLFV). Residues 272-429 (LNRLWLWAQA…SPAPPEAPGQ (158 aa)) lie on the Cytoplasmic side of the membrane. Residues 309-352 (CAICLDEYEEGDQLKILPCSHTYHCKCIDPWFSQAPRRSCPVCK) form an RING-type; atypical zinc finger. 2 disordered regions span residues 358–381 (TEDS…GHRP) and 409–429 (TTSL…APGQ). Residues 409-420 (TTSLEAEDTTVS) are compositionally biased toward polar residues.

Interacts with CANX.

The protein localises to the endoplasmic reticulum membrane. It carries out the reaction S-ubiquitinyl-[E2 ubiquitin-conjugating enzyme]-L-cysteine + [acceptor protein]-L-lysine = [E2 ubiquitin-conjugating enzyme]-L-cysteine + N(6)-ubiquitinyl-[acceptor protein]-L-lysine.. It participates in protein modification; protein ubiquitination. Its function is as follows. E3 ubiquitin-protein ligase that acts as a negative regulator of NOD2 signaling by mediating ubiquitination and degradation of RIPK2. Also catalyzes ubiquitination and proteasomal degradation of CANX within the endoplasmic reticulum. Could have a role in spermatogenesis. This is E3 ubiquitin-protein ligase ZNRF4 (ZNRF4) from Macaca fascicularis (Crab-eating macaque).